The chain runs to 191 residues: Probable calcium-binding protein CML8 (191 aa).

A disordered region spans residues 1-41 (MASKYRGYYHDEASSAAGGGGGGGGGDGYRREKQVRKKRLT). The segment covering 17–27 (AGGGGGGGGGD) has biased composition (gly residues). EF-hand domains lie at 43–78 (QKRK…LGFE), 79–114 (MTPE…KMGE), 116–151 (DARE…TGEP), and 152–187 (FTLD…IGFG). Ca(2+)-binding residues include D56, D58, S60, T62, E67, D92, D94, S96, T98, E103, D129, D131, N133, K135, D140, D165, N167, D169, E171, and E176.

In terms of biological role, potential calcium sensor. This chain is Probable calcium-binding protein CML8 (CML8), found in Oryza sativa subsp. japonica (Rice).